The chain runs to 356 residues: Leucine-rich repeat and transmembrane domain-containing protein 1 (356 aa).

A signal peptide spans 1–32 (MLNEGLCCGAWAMKGTLLLVSSVGLLLPGVGS). Positions 33-62 (CPMKCLCHPSSNSVDCSGQGLSKVPRDLPP) constitute an LRRNT domain. Over 33-299 (CPMKCLCHPS…PTNLRHAVAT (267 aa)) the chain is Extracellular. 5 LRR repeats span residues 63–84 (WTVTLLLQDNRIHWLPALAFQS), 87–108 (LLSTLNLSNNSLSNLAAEAFYG), 111–132 (HLRVLNVTQNSLLSIESSFAHA), 135–156 (GLRELDLSSNSLRILPTSLGKP), and 159–180 (NLTVFAVQQNHLLHLDRELLEA). Residues N92 and N116 are each glycosylated (N-linked (GlcNAc...) asparagine). N159 carries N-linked (GlcNAc...) asparagine glycosylation. Residues 192–246 (NPWICDCHLLGLKLWLERFTFQGGETDGAICRLPEPWQGKALLSIPHELYQPCSL) form the LRRCT domain. A compositionally biased stretch (polar residues) spans 255–277 (LVQQPGSAPQDAQKSHENSSGQQ). Positions 255–288 (LVQQPGSAPQDAQKSHENSSGQQDPLECEAKPKP) are disordered. The helical transmembrane segment at 300 to 320 (VVITGVVCGIVCLMMLAAAIY) threads the bilayer. At 321-356 (GCTYAAITAQYQGRPLASARKSEKMGSKELMDSSSA) the chain is on the cytoplasmic side.

The protein localises to the membrane. This chain is Leucine-rich repeat and transmembrane domain-containing protein 1 (Lrtm1), found in Mus musculus (Mouse).